The following is a 1218-amino-acid chain: ABC transporter NFT1 (1218 aa).

The Extracellular portion of the chain corresponds to 1–29 (MIKNGTCPYWERDDLSECARREYIEFKFP). N4 carries N-linked (GlcNAc...) asparagine glycosylation. Residues 30 to 50 (LFILLTGMIYAFCKVFRAFYL) form a helical membrane-spanning segment. Over 51–103 (RGKNHTNEAPEFEEQGNGNHEYARFSVLRLKSAWESRSFCNVNNRSTFDKFKK) the chain is Cytoplasmic. A helical transmembrane segment spans residues 104-124 (FIEGAFIVLQLTIHLYILSSM). The Extracellular portion of the chain corresponds to 125 to 130 (PMDNKK). A helical transmembrane segment spans residues 131 to 151 (FFHQGFLVQMFLWILLLVVIT). Residues 152–169 (LRLISASQSFRWVLACKR) lie on the Cytoplasmic side of the membrane. Residues 170-190 (DLWAVSFYSYASLFTLSILPL) form a helical membrane-spanning segment. Residues 191–201 (RSVFIGKIKDK) lie on the Extracellular side of the membrane. A helical transmembrane segment spans residues 202-222 (IMVKYIISETFIDLALLLLLS). At 223-302 (TSSIEGTRYS…SSKKGRLLPN (80 aa)) the chain is on the cytoplasmic side. The helical transmembrane segment at 303 to 323 (IICYFKAVFISQLFLAFVSSF) threads the bilayer. In terms of domain architecture, ABC transmembrane type-1 1 spans 311 to 621 (FISQLFLAFV…IASTVSLLIQ (311 aa)). Over 324-351 (LNFVPSLLMPRILSYVNDPKSKSWNLVS) the chain is Extracellular. Residues 352 to 374 (LYVSSMLVSKIIATTCRGQGLFL) traverse the membrane as a helical segment. The Cytoplasmic portion of the chain corresponds to 375-449 (GEKGTMQLRT…VMSIDAFKVS (75 aa)). A disordered region spans residues 410–434 (NASTSFEENPDSSEAEPRKKSSRKD). Residues 424-434 (AEPRKKSSRKD) are compositionally biased toward basic and acidic residues. A helical membrane pass occupies residues 450–470 (EAMNTFYLACEAVFMTVTALM). Topologically, residues 471–481 (ILYSLLGWSAF) are extracellular. Residues 482–504 (AGTFALLAMIPLNFWCATFYGNY) traverse the membrane as a helical segment. Residues 505-558 (QADQLILTDKRTSGISEALNSIRVIKLLAWENLFYQKIINVRDGEIRLLKKKAT) are Cytoplasmic-facing. Residues 559-579 (IFFLNHLIWFFGPTLVSAITF) form a helical membrane-spanning segment. The Extracellular segment spans residues 580–584 (SVFIK). A helical transmembrane segment spans residues 585–605 (FQNQTLTPTIAFTALSLFAIL). Residues 606–953 (RTPMDQIAST…KFSAYKWLAD (348 aa)) lie on the Cytoplasmic side of the membrane. The region spanning 651–892 (FGFEDASMEW…NEFLRESINN (242 aa)) is the ABC transporter domain. Residue 686 to 693 (GPTGSGKS) participates in ATP binding. Residues 892 to 901 (NDSKNTTHNQ) are compositionally biased toward polar residues. A disordered region spans residues 892 to 926 (NDSKNTTHNQIDLKRSTTSKKTKNGDPEGGNSQDE). The helical transmembrane segment at 954-974 (YFGGLGVVFVFTSSSILIHGI) threads the bilayer. One can recognise an ABC transmembrane type-1 2 domain in the interval 961–1218 (VFVFTSSSIL…SSVMIIMKAS (258 aa)). Residues 975 to 1013 (TLSQGFWLRYWLDTGSSGSKSTWLYRIVEGHSNIYFLLT) lie on the Extracellular side of the membrane. A helical transmembrane segment spans residues 1014–1034 (YIIIGLVSSFLTSGKVWIAII). The Cytoplasmic segment spans residues 1035–1082 (SGTNVTKKIFAKLLSSILYAKLRFHNVTPTGRIMNRFSKDMDIIDQQL). The chain crosses the membrane as a helical span at residues 1083 to 1105 (IPNFEGLSYSVVVCLWIILLIGY). The Extracellular segment spans residues 1106–1109 (VTPQ). The helical transmembrane segment at 1110–1132 (FLLFAIPLCALYYTVCTLYLRAS) threads the bilayer. Residues 1133–1197 (RELKRIDNIN…NMATEWITYR (65 aa)) lie on the Cytoplasmic side of the membrane. Residues 1198 to 1218 (VDIIGTLVLFSSSVMIIMKAS) traverse the membrane as a helical segment.

This sequence belongs to the ABC transporter superfamily. ABCC family. Conjugate transporter (TC 3.A.1.208) subfamily.

It localises to the membrane. The polypeptide is ABC transporter NFT1 (NFT1) (Saccharomyces cerevisiae (strain ATCC 204508 / S288c) (Baker's yeast)).